We begin with the raw amino-acid sequence, 403 residues long: Argininosuccinate synthase (403 aa).

ATP-binding positions include Ala13–Ser21 and Ala40. L-citrulline is bound by residues Tyr92 and Ser97. Gly122 is a binding site for ATP. Residues Thr124, Asn128, and Asp129 each coordinate L-aspartate. Asn128 is an L-citrulline binding site. L-citrulline is bound by residues Arg132, Ser181, Ser190, Glu266, and Tyr278.

It belongs to the argininosuccinate synthase family. Type 1 subfamily. As to quaternary structure, homotetramer.

The protein resides in the cytoplasm. It carries out the reaction L-citrulline + L-aspartate + ATP = 2-(N(omega)-L-arginino)succinate + AMP + diphosphate + H(+). The protein operates within amino-acid biosynthesis; L-arginine biosynthesis; L-arginine from L-ornithine and carbamoyl phosphate: step 2/3. In Aliivibrio salmonicida (strain LFI1238) (Vibrio salmonicida (strain LFI1238)), this protein is Argininosuccinate synthase.